The chain runs to 549 residues: Chaperonin GroEL 2 (549 aa).

ATP-binding positions include 29–32, K50, 86–90, G414, 477–479, and D493; these read TLGP, DGTTT, and NAA.

The protein belongs to the chaperonin (HSP60) family. In terms of assembly, forms a cylinder of 14 subunits composed of two heptameric rings stacked back-to-back. Interacts with the co-chaperonin GroES.

The protein resides in the cytoplasm. It catalyses the reaction ATP + H2O + a folded polypeptide = ADP + phosphate + an unfolded polypeptide.. Together with its co-chaperonin GroES, plays an essential role in assisting protein folding. The GroEL-GroES system forms a nano-cage that allows encapsulation of the non-native substrate proteins and provides a physical environment optimized to promote and accelerate protein folding. The chain is Chaperonin GroEL 2 from Myxococcus xanthus (strain DK1622).